The chain runs to 729 residues: Fatty acid oxidation complex subunit alpha (729 aa).

The enoyl-CoA hydratase/isomerase stretch occupies residues 1-189 (MLYKGDTLYL…KVGLVDAVVK (189 aa)). Substrate is bound at residue Asp-296. Residues 311-729 (ETPKQAAVLG…AQPVGELQTA (419 aa)) are 3-hydroxyacyl-CoA dehydrogenase. NAD(+)-binding positions include Met-324, Asp-343, 400–402 (VVE), Lys-407, and Ser-429. His-450 acts as the For 3-hydroxyacyl-CoA dehydrogenase activity in catalysis. Asn-453 serves as a coordination point for NAD(+). 2 residues coordinate substrate: Asn-500 and Tyr-660. Residues 708–729 (SHNAPYYPQVEPAQPVGELQTA) are disordered.

It in the N-terminal section; belongs to the enoyl-CoA hydratase/isomerase family. In the C-terminal section; belongs to the 3-hydroxyacyl-CoA dehydrogenase family. Heterotetramer of two alpha chains (FadB) and two beta chains (FadA).

It catalyses the reaction a (3S)-3-hydroxyacyl-CoA + NAD(+) = a 3-oxoacyl-CoA + NADH + H(+). The enzyme catalyses a (3S)-3-hydroxyacyl-CoA = a (2E)-enoyl-CoA + H2O. The catalysed reaction is a 4-saturated-(3S)-3-hydroxyacyl-CoA = a (3E)-enoyl-CoA + H2O. It carries out the reaction (3S)-3-hydroxybutanoyl-CoA = (3R)-3-hydroxybutanoyl-CoA. It catalyses the reaction a (3Z)-enoyl-CoA = a 4-saturated (2E)-enoyl-CoA. The enzyme catalyses a (3E)-enoyl-CoA = a 4-saturated (2E)-enoyl-CoA. Its pathway is lipid metabolism; fatty acid beta-oxidation. Functionally, involved in the aerobic and anaerobic degradation of long-chain fatty acids via beta-oxidation cycle. Catalyzes the formation of 3-oxoacyl-CoA from enoyl-CoA via L-3-hydroxyacyl-CoA. It can also use D-3-hydroxyacyl-CoA and cis-3-enoyl-CoA as substrate. The sequence is that of Fatty acid oxidation complex subunit alpha from Cronobacter sakazakii (strain ATCC BAA-894) (Enterobacter sakazakii).